We begin with the raw amino-acid sequence, 102 residues long: Protein isd11 (102 aa).

The protein belongs to the complex I LYR family.

The protein localises to the mitochondrion. In terms of biological role, required for mitochondrial iron-sulfur (Fe-S) protein biosynthesis. The chain is Protein isd11 (isd11) from Schizosaccharomyces pombe (strain 972 / ATCC 24843) (Fission yeast).